The following is a 111-amino-acid chain: uncharacterized protein (111 aa).

Positions 3-29 form a coiled coil; that stretch reads RKITSYKTSLQGLREENEDVELMNLNL. A PPM-type phosphatase domain is found at 6–111; that stretch reads TSYKTSLQGL…TWWMYCSSYY (106 aa).

This is an uncharacterized protein from Acanthamoeba polyphaga mimivirus (APMV).